We begin with the raw amino-acid sequence, 140 residues long: MKTYVPKQVEPRWVLIDAEGKTLGRLATKIATLLRGKHRPDWTPNVAMGDFVVVVNADKIRVTGKKLEQKIYTRYSGYPGGLKKIPLEKMLATHPERVLEHAVKGMLPKGPLGRRLFKRLKVYAGPDHPHQAQRPEKLEV.

As to quaternary structure, part of the 50S ribosomal subunit.

Functionally, this protein is one of the early assembly proteins of the 50S ribosomal subunit, although it is not seen to bind rRNA by itself. It is important during the early stages of 50S assembly. In Thermus thermophilus (strain ATCC 27634 / DSM 579 / HB8), this protein is Large ribosomal subunit protein uL13.